We begin with the raw amino-acid sequence, 277 residues long: Large ribosomal subunit protein uL2 (277 aa).

Disordered regions lie at residues 32–58 and 225–277; these read KSLT…RGGG and VAMN…RRNN.

Belongs to the universal ribosomal protein uL2 family. In terms of assembly, part of the 50S ribosomal subunit. Forms a bridge to the 30S subunit in the 70S ribosome.

One of the primary rRNA binding proteins. Required for association of the 30S and 50S subunits to form the 70S ribosome, for tRNA binding and peptide bond formation. It has been suggested to have peptidyltransferase activity; this is somewhat controversial. Makes several contacts with the 16S rRNA in the 70S ribosome. This Borrelia recurrentis (strain A1) protein is Large ribosomal subunit protein uL2.